The following is a 63-amino-acid chain: Protein D-63 (63 aa).

Homodimer.

Functionally, this protein may be involved in virus assembly. This chain is Protein D-63, found in Saccharolobus solfataricus (Sulfolobus solfataricus).